The sequence spans 207 residues: Urease accessory protein UreG (207 aa).

Position 16-23 (16-23) interacts with GTP; it reads GPVGSGKT.

The protein belongs to the SIMIBI class G3E GTPase family. UreG subfamily. In terms of assembly, homodimer. UreD, UreF and UreG form a complex that acts as a GTP-hydrolysis-dependent molecular chaperone, activating the urease apoprotein by helping to assemble the nickel containing metallocenter of UreC. The UreE protein probably delivers the nickel.

It is found in the cytoplasm. Its function is as follows. Facilitates the functional incorporation of the urease nickel metallocenter. This process requires GTP hydrolysis, probably effectuated by UreG. The sequence is that of Urease accessory protein UreG from Blochmanniella pennsylvanica (strain BPEN).